The sequence spans 452 residues: UDP-N-acetylmuramoylalanine--D-glutamate ligase (452 aa).

119–125 (GSNGKTT) is an ATP binding site.

This sequence belongs to the MurCDEF family.

The protein resides in the cytoplasm. It catalyses the reaction UDP-N-acetyl-alpha-D-muramoyl-L-alanine + D-glutamate + ATP = UDP-N-acetyl-alpha-D-muramoyl-L-alanyl-D-glutamate + ADP + phosphate + H(+). Its pathway is cell wall biogenesis; peptidoglycan biosynthesis. Functionally, cell wall formation. Catalyzes the addition of glutamate to the nucleotide precursor UDP-N-acetylmuramoyl-L-alanine (UMA). This Streptococcus pyogenes serotype M4 (strain MGAS10750) protein is UDP-N-acetylmuramoylalanine--D-glutamate ligase.